Reading from the N-terminus, the 101-residue chain is Putative pterin-4-alpha-carbinolamine dehydratase (101 aa).

The protein belongs to the pterin-4-alpha-carbinolamine dehydratase family.

It carries out the reaction (4aS,6R)-4a-hydroxy-L-erythro-5,6,7,8-tetrahydrobiopterin = (6R)-L-erythro-6,7-dihydrobiopterin + H2O. This is Putative pterin-4-alpha-carbinolamine dehydratase from Rhizobium johnstonii (strain DSM 114642 / LMG 32736 / 3841) (Rhizobium leguminosarum bv. viciae).